The primary structure comprises 496 residues: Serine/threonine-protein kinase chk1 (496 aa).

Residues 10 to 272 (YHIGREIGTG…VKHVVQHPWL (263 aa)) enclose the Protein kinase domain. ATP-binding positions include 16–24 (IGTGAFASV) and K38. D137 serves as the catalytic Proton acceptor.

It belongs to the protein kinase superfamily. CAMK Ser/Thr protein kinase family. NIM1 subfamily. As to quaternary structure, interacts with crb2. Interacts with rad3. Interacts with rfp1. In terms of processing, phosphorylated.

It is found in the nucleus. The enzyme catalyses L-seryl-[protein] + ATP = O-phospho-L-seryl-[protein] + ADP + H(+). It carries out the reaction L-threonyl-[protein] + ATP = O-phospho-L-threonyl-[protein] + ADP + H(+). Serine/threonine-protein kinase which is required for checkpoint-mediated cell cycle arrest and activation of DNA repair in response to the presence of DNA damage or unreplicated DNA. May also negatively regulate cell cycle progression during unperturbed cell cycles. Binds to and phosphorylates CDC25. This leads to negative regulation of CDC25 and prevents mitotic entry. This chain is Serine/threonine-protein kinase chk1 (chk1), found in Schizosaccharomyces pombe (strain 972 / ATCC 24843) (Fission yeast).